We begin with the raw amino-acid sequence, 126 residues long: Protein Wnt-1 (126 aa).

The O-palmitoleoyl serine; by PORCN moiety is linked to residue S1. C92 and C107 are joined by a disulfide. N93 and N123 each carry an N-linked (GlcNAc...) asparagine glycan.

This sequence belongs to the Wnt family. In terms of processing, palmitoleoylation is required for efficient binding to frizzled receptors. Palmitoleoylation is necessary for proper trafficking to cell surface. Depalmitoleoylated by NOTUM, leading to inhibit Wnt signaling pathway.

The protein localises to the secreted. Its subcellular location is the extracellular space. It is found in the extracellular matrix. Functionally, ligand for members of the frizzled family of seven transmembrane receptors. Acts in the canonical Wnt signaling pathway by promoting beta-catenin-dependent transcriptional activation. Plays an essential role in the development of the embryonic brain and central nervous system (CNS). Has a role in osteoblast function, bone development and bone homeostasis. The chain is Protein Wnt-1 (WNT-1) from Plestiodon skiltonianus (Western skink).